The primary structure comprises 381 residues: MKKVVILGSTGSIGKNALEVIRKFPDKFKVLGLAAKSSVNILEEQIKEFNPQYVAVFDKKACDELRKKVKNLEILKGNEGICKLAKLKEADIILSAIVGAAGLIPTFEAVKEGKTIGVANKESFVMAGELIKKQGKISGAKIIPVDSEHSAVFQCINGCNKPYIKKIWLTASGGPFRGKKSYEIENVTPQEALNHPKWKMGKRITIDSATLMNKGFEVIEAHYLFDMPAENIGVLIHPQSIIHCLVEFIDGTYLAQMSNPDMKAPIALALSFPERLPEIVPPIDWSITTKLQFEIPDTEVFPCLKLAYEALNAGGSMPAVLNAADEVAVEAFLSGRLKFKEIYKIIKKVMDAHKIVSVSSIEEVLEADSWARKMAKKEIGE.

The NADPH site is built by Thr-10, Gly-11, Ser-12, Ile-13, and Asn-120. Lys-121 lines the 1-deoxy-D-xylulose 5-phosphate pocket. An NADPH-binding site is contributed by Glu-122. Position 146 (Asp-146) interacts with Mn(2+). Residues Ser-147, Glu-148, Ser-172, and His-195 each coordinate 1-deoxy-D-xylulose 5-phosphate. Glu-148 lines the Mn(2+) pocket. Position 201 (Gly-201) interacts with NADPH. Residues Ser-208, Asn-213, Lys-214, and Glu-217 each coordinate 1-deoxy-D-xylulose 5-phosphate. Glu-217 lines the Mn(2+) pocket.

It belongs to the DXR family. The cofactor is Mg(2+). It depends on Mn(2+) as a cofactor.

The catalysed reaction is 2-C-methyl-D-erythritol 4-phosphate + NADP(+) = 1-deoxy-D-xylulose 5-phosphate + NADPH + H(+). Its pathway is isoprenoid biosynthesis; isopentenyl diphosphate biosynthesis via DXP pathway; isopentenyl diphosphate from 1-deoxy-D-xylulose 5-phosphate: step 1/6. In terms of biological role, catalyzes the NADPH-dependent rearrangement and reduction of 1-deoxy-D-xylulose-5-phosphate (DXP) to 2-C-methyl-D-erythritol 4-phosphate (MEP). This chain is 1-deoxy-D-xylulose 5-phosphate reductoisomerase, found in Thermodesulfovibrio yellowstonii (strain ATCC 51303 / DSM 11347 / YP87).